The primary structure comprises 301 residues: (R)-2-haloacid dehalogenase (301 aa).

It belongs to the HAD-like hydrolase superfamily. S-2-haloalkanoic acid dehalogenase family. In terms of assembly, homotetramer.

It catalyses the reaction an (R)-2-haloacid + H2O = a (2S)-2-hydroxycarboxylate + a halide anion + H(+). In terms of biological role, catalyzes the hydrolytic dehalogenation of small (R)-2-haloalkanoic acids to yield the corresponding (S)-2-hydroxyalkanoic acids. Acts on acids of short chain lengths, C(2) to C(4), with inversion of configuration at C-2. This is (R)-2-haloacid dehalogenase (hadD) from Pseudomonas putida (Arthrobacter siderocapsulatus).